Here is a 103-residue protein sequence, read N- to C-terminus: Large ribosomal subunit protein bL28 (103 aa).

This sequence belongs to the bacterial ribosomal protein bL28 family.

The sequence is that of Large ribosomal subunit protein bL28 from Anaplasma marginale (strain St. Maries).